A 258-amino-acid polypeptide reads, in one-letter code: Deoxyribose-phosphate aldolase (258 aa).

The Proton donor/acceptor role is filled by Asp-102. Catalysis depends on Lys-165, which acts as the Schiff-base intermediate with acetaldehyde. The Proton donor/acceptor role is filled by Lys-199.

The protein belongs to the DeoC/FbaB aldolase family. DeoC type 2 subfamily.

It localises to the cytoplasm. It carries out the reaction 2-deoxy-D-ribose 5-phosphate = D-glyceraldehyde 3-phosphate + acetaldehyde. Its pathway is carbohydrate degradation; 2-deoxy-D-ribose 1-phosphate degradation; D-glyceraldehyde 3-phosphate and acetaldehyde from 2-deoxy-alpha-D-ribose 1-phosphate: step 2/2. Catalyzes a reversible aldol reaction between acetaldehyde and D-glyceraldehyde 3-phosphate to generate 2-deoxy-D-ribose 5-phosphate. This is Deoxyribose-phosphate aldolase from Vibrio parahaemolyticus serotype O3:K6 (strain RIMD 2210633).